Here is a 254-residue protein sequence, read N- to C-terminus: uncharacterized protein (254 aa).

The stretch at 66–111 (DMVSEMNKRMDDLAARIVVLEDEKAELRRINQRLTEKVRDKDMEKA) forms a coiled coil.

This is an uncharacterized protein from Ostreid herpesvirus 1 (isolate France) (OsHV-1).